Consider the following 239-residue polypeptide: Ubiquinone biosynthesis O-methyltransferase (239 aa).

S-adenosyl-L-methionine-binding residues include R44, G63, D84, and M128.

This sequence belongs to the methyltransferase superfamily. UbiG/COQ3 family.

It catalyses the reaction a 3-demethylubiquinol + S-adenosyl-L-methionine = a ubiquinol + S-adenosyl-L-homocysteine + H(+). It carries out the reaction a 3-(all-trans-polyprenyl)benzene-1,2-diol + S-adenosyl-L-methionine = a 2-methoxy-6-(all-trans-polyprenyl)phenol + S-adenosyl-L-homocysteine + H(+). Its pathway is cofactor biosynthesis; ubiquinone biosynthesis. In terms of biological role, O-methyltransferase that catalyzes the 2 O-methylation steps in the ubiquinone biosynthetic pathway. The chain is Ubiquinone biosynthesis O-methyltransferase from Xanthomonas euvesicatoria pv. vesicatoria (strain 85-10) (Xanthomonas campestris pv. vesicatoria).